Consider the following 319-residue polypeptide: N-acyl-aromatic-L-amino acid amidohydrolase (carboxylate-forming) (319 aa).

A hydrolytic domain region spans residues 1 to 210 (MCSLPVPREP…TVLDFIELFN (210 aa)). Zn(2+)-binding residues include histidine 21 and glutamate 24. Substrate-binding positions include arginine 63 and 70–71 (NR). Zn(2+) is bound at residue histidine 116. Residues glutamate 178 and tyrosine 288 each coordinate substrate. The shielding domain stretch occupies residues 211–318 (QGTAFPAFEM…PALTPAPSPA (108 aa)).

Belongs to the AspA/AstE family. Aspartoacylase subfamily. In terms of assembly, exists as a mixture of homodimers and homotetramer, both catalytically active. (Microbial infection) Interacts with hepatitis C virus/HCV core protein. Zn(2+) serves as cofactor.

The protein resides in the apical cell membrane. Its subcellular location is the cytoplasm. It carries out the reaction an N-acyl-aromatic L-alpha-amino acid + H2O = an aromatic L-alpha-amino acid + a carboxylate. The catalysed reaction is an N-acetyl-L-cysteine-S-conjugate + H2O = an S-substituted L-cysteine + acetate. Functionally, plays an important role in deacetylating mercapturic acids in kidney proximal tubules. Also acts on N-acetyl-aromatic amino acids. This Homo sapiens (Human) protein is N-acyl-aromatic-L-amino acid amidohydrolase (carboxylate-forming) (ACY3).